A 437-amino-acid polypeptide reads, in one-letter code: Histidinol dehydrogenase (437 aa).

Residues Tyr137, Gln199, and Asn222 each coordinate NAD(+). Substrate contacts are provided by Ser245, Gln267, and His270. Zn(2+)-binding residues include Gln267 and His270. Residues Glu335 and His336 each act as proton acceptor in the active site. Residues His336, Asp369, Glu423, and His428 each contribute to the substrate site. Asp369 contacts Zn(2+). His428 is a Zn(2+) binding site.

The protein belongs to the histidinol dehydrogenase family. It depends on Zn(2+) as a cofactor.

It catalyses the reaction L-histidinol + 2 NAD(+) + H2O = L-histidine + 2 NADH + 3 H(+). It functions in the pathway amino-acid biosynthesis; L-histidine biosynthesis; L-histidine from 5-phospho-alpha-D-ribose 1-diphosphate: step 9/9. Its function is as follows. Catalyzes the sequential NAD-dependent oxidations of L-histidinol to L-histidinaldehyde and then to L-histidine. The polypeptide is Histidinol dehydrogenase (Parasynechococcus marenigrum (strain WH8102)).